The following is a 254-amino-acid chain: MALTNKNIIFVAGLGGIGLDTSRELVKRDLKNLVILDRIDNPAAIAELKAINPKVTVTFYPYDVTTPLTETTKLLKTIFAQLKTVDVLINGAGILDDHQIERTIAVNFTGLVNTTTAILDFWDKRKGGPGGVICNIGSVTGFNAIYQVPVYSASKAAVVSFTQSIAKLANVTGVTAFTVNPGITKTTLVHKFNSWLDVETRVAEKLLEHPTQTTLACAQNFVKAIELNKNGAIWKLDLGTLEPIEWTKHWDSGI.

An NAD(+)-binding site is contributed by 9–32 (IFVAGLGGIGLDTSRELVKRDLKN). S138 serves as a coordination point for substrate. The active-site Proton acceptor is Y151.

This sequence belongs to the short-chain dehydrogenases/reductases (SDR) family. Homodimer.

It carries out the reaction a primary alcohol + NAD(+) = an aldehyde + NADH + H(+). It catalyses the reaction a secondary alcohol + NAD(+) = a ketone + NADH + H(+). This is Alcohol dehydrogenase (Adh) from Drosophila paulistorum (Fruit fly).